The primary structure comprises 1093 residues: Fused isobutyryl-CoA mutase (1093 aa).

Positions 1 to 20 (MTDLSDVSRTAAAKPPAVPG) are disordered. Residues 26–156 (KVRFVTAASL…AGMITDMAQR (131 aa)) enclose the B12-binding domain. His39 provides a ligand contact to adenosylcob(III)alamin. Residues 169–417 (LDTVVAGDRR…YQGLVGALGA (249 aa)) form a GTPase chaperone MeaI region. 219–224 (GAGKSS) serves as a coordination point for GTP. Residues Ser223, Ile248, Asp249, and Asp262 each coordinate Mg(2+). Position 265 (Arg265) interacts with GTP. Positions 310 and 311 each coordinate Mg(2+). GTP is bound at residue 357–360 (NKFD). The tract at residues 418–579 (RGMSLKPGTL…MRENVPGSFP (162 aa)) is linker. Substrate contacts are provided by Phe587, Arg622, Arg728, Tyr772, Ser821, Arg856, and Lys861. GTP-binding residues include Glu973 and Asn1092.

The protein belongs to the IcmF family. In terms of assembly, homodimer. The cofactor is adenosylcob(III)alamin. Mg(2+) is required as a cofactor.

The catalysed reaction is 2-methylpropanoyl-CoA = butanoyl-CoA. It carries out the reaction 3-methylbutanoyl-CoA = 2,2-dimethylpropanoyl-CoA. The enzyme catalyses GTP + H2O = GDP + phosphate + H(+). Is prone to inactivation during catalytic turnover due to the occasional loss of the 5'-deoxyadenosine moiety and formation of the inactive cob(II)alamin cofactor in its active site. The GTPase activity of IcmF powers the ejection of the inactive cofactor and requires the presence of an acceptor protein, adenosyltransferase (ATR), for receiving it. ATR, in turn, catalyzes an adenosylation reaction converting cob(II)alamin in the presence of ATP and a reductant to the active AdoCbl cofactor. The repaired cofactor is then reloaded onto IcmF in a GTPase-gated step, regenerating active enzyme. The GTPase activity of IcmF is significantly decreased in the presence of excess of AdoCbl or cob(II)alamin and is higher in the apoenzyme state, indicating that the G-domain senses the presence and identity of the cofactor in the mutase active site. Catalyzes the reversible interconversion of isobutyryl-CoA and n-butyryl-CoA, and to a much lesser extent, of pivalyl-CoA and isovaleryl-CoA, using radical chemistry. Also exhibits GTPase activity, associated with its G-protein domain (MeaI) that functions as a chaperone that assists cofactor delivery and proper holo-enzyme assembly. The G-domain of IcmF also has a role in its cofactor repair. Does not display ATPase activity. The protein is Fused isobutyryl-CoA mutase of Cupriavidus metallidurans (strain ATCC 43123 / DSM 2839 / NBRC 102507 / CH34) (Ralstonia metallidurans).